Reading from the N-terminus, the 364-residue chain is Developmentally-regulated GTP-binding protein 2 (364 aa).

At lysine 21 the chain carries (3S)-3-hydroxylysine. An OBG-type G domain is found at 63–288 (ARVALIGFPS…LLEMLWEYLA (226 aa)). GTP contacts are provided by residues 69 to 76 (GFPSVGKS), 94 to 98 (FTTLT), 115 to 118 (DLPG), 246 to 249 (NKID), and 269 to 271 (SCG). Residues serine 76 and threonine 96 each coordinate Mg(2+). Positions 288–363 (ALTCIYTKKR…EHEDVIQIVK (76 aa)) constitute a TGS domain.

Belongs to the TRAFAC class OBG-HflX-like GTPase superfamily. OBG GTPase family. Interacts with RWDD1; this interaction confers protection to polyubiquitination and proteolytic degradation. Interacts with JMJD7; this interaction is direct. Mg(2+) is required as a cofactor. In terms of processing, polyubiquitinated. Post-translationally, hydroxylated (with S stereochemistry) at C-3 of Lys-21 by JMJD7.

It localises to the nucleus. The protein resides in the cytoplasm. It carries out the reaction GTP + H2O = GDP + phosphate + H(+). Catalyzes the conversion of GTP to GDP through hydrolysis of the gamma-phosphate bond in GTP. When hydroxylated at C-3 of 'Lys-21' by JMJD7, may bind to RNA and play a role in translation. The sequence is that of Developmentally-regulated GTP-binding protein 2 (DRG2) from Bos taurus (Bovine).